Here is a 130-residue protein sequence, read N- to C-terminus: Small ribosomal subunit protein uS9 (130 aa).

Belongs to the universal ribosomal protein uS9 family.

The sequence is that of Small ribosomal subunit protein uS9 from Paraburkholderia phymatum (strain DSM 17167 / CIP 108236 / LMG 21445 / STM815) (Burkholderia phymatum).